The primary structure comprises 284 residues: MYVVSTKQMLNNAQRGGYAVPAFNIHNLETMQVVVETAANLHAPVIIAGTPGTFTHAGTENLLALVSAMAKQYHHPLAIHLDHHTKFDDIAQKVRSGVRSVMIDASHLPFAQNISRVKEVVDFCHRFDVSVEAELGQLGGQEDDVQVNEVDALYTNPAQAREFAEATGIDSLAVAIGTAHGMYASAPVLDFSRLENIRQWVNLPLVLHGASGLSTKDIQQTIKLGICKINVATELKNAFLQSLKNYLTEHPEATDPRDYLQSAKSAMRDVVSKVIADCGCEGRA.

The active-site Proton donor is Asp82. Zn(2+)-binding residues include His83 and His180. Dihydroxyacetone phosphate is bound at residue Gly181. Position 208 (His208) interacts with Zn(2+). Dihydroxyacetone phosphate contacts are provided by residues 209-211 (GAS) and 230-233 (NVAT).

Belongs to the class II fructose-bisphosphate aldolase family. TagBP aldolase GatY subfamily. In terms of assembly, forms a complex with GatZ. Zn(2+) serves as cofactor.

It catalyses the reaction D-tagatofuranose 1,6-bisphosphate = D-glyceraldehyde 3-phosphate + dihydroxyacetone phosphate. The protein operates within carbohydrate metabolism; D-tagatose 6-phosphate degradation; D-glyceraldehyde 3-phosphate and glycerone phosphate from D-tagatose 6-phosphate: step 2/2. Functionally, catalytic subunit of the tagatose-1,6-bisphosphate aldolase GatYZ, which catalyzes the reversible aldol condensation of dihydroxyacetone phosphate (DHAP or glycerone-phosphate) with glyceraldehyde 3-phosphate (G3P) to produce tagatose 1,6-bisphosphate (TBP). Requires GatZ subunit for full activity and stability. Is involved in the catabolism of galactitol. The protein is D-tagatose-1,6-bisphosphate aldolase subunit GatY of Shigella flexneri.